The chain runs to 187 residues: UPF0301 protein YE3428 (187 aa).

The protein belongs to the UPF0301 (AlgH) family.

This is UPF0301 protein YE3428 from Yersinia enterocolitica serotype O:8 / biotype 1B (strain NCTC 13174 / 8081).